The chain runs to 86 residues: Sugar transporter SemiSWEET (86 aa).

The next 3 membrane-spanning stretches (helical) occupy residues 3–23, 37–57, and 61–81; these read PFLIKLIGFAAATCTTVAYAP, ISLGMFLVMVLGLALWLIYGL, and DAPLIASNAVTMLLAGGILVM. One can recognise a PQ-loop domain in the interval 6 to 63; the sequence is IKLIGFAAATCTTVAYAPQFIKVLKTRSARDISLGMFLVMVLGLALWLIYGLLSGDAP.

As to quaternary structure, homodimer. Homooligomer.

The protein localises to the cell membrane. Mediates sucrose transmembrane transport down a concentration gradient. In Bradyrhizobium diazoefficiens (strain JCM 10833 / BCRC 13528 / IAM 13628 / NBRC 14792 / USDA 110), this protein is Sugar transporter SemiSWEET.